Consider the following 405-residue polypeptide: Probable tRNA sulfurtransferase (405 aa).

One can recognise a THUMP domain in the interval 60–165; that stretch reads DKVMGRLKLV…LNGIFLSSET (106 aa). Residues 183-184, 208-209, R265, G287, and Q296 each bind ATP; these read ML and HF.

It belongs to the ThiI family.

It localises to the cytoplasm. The catalysed reaction is [ThiI sulfur-carrier protein]-S-sulfanyl-L-cysteine + a uridine in tRNA + 2 reduced [2Fe-2S]-[ferredoxin] + ATP + H(+) = [ThiI sulfur-carrier protein]-L-cysteine + a 4-thiouridine in tRNA + 2 oxidized [2Fe-2S]-[ferredoxin] + AMP + diphosphate. It carries out the reaction [ThiS sulfur-carrier protein]-C-terminal Gly-Gly-AMP + S-sulfanyl-L-cysteinyl-[cysteine desulfurase] + AH2 = [ThiS sulfur-carrier protein]-C-terminal-Gly-aminoethanethioate + L-cysteinyl-[cysteine desulfurase] + A + AMP + 2 H(+). The protein operates within cofactor biosynthesis; thiamine diphosphate biosynthesis. Catalyzes the ATP-dependent transfer of a sulfur to tRNA to produce 4-thiouridine in position 8 of tRNAs, which functions as a near-UV photosensor. Also catalyzes the transfer of sulfur to the sulfur carrier protein ThiS, forming ThiS-thiocarboxylate. This is a step in the synthesis of thiazole, in the thiamine biosynthesis pathway. The sulfur is donated as persulfide by IscS. This chain is Probable tRNA sulfurtransferase, found in Lactiplantibacillus plantarum (strain ATCC BAA-793 / NCIMB 8826 / WCFS1) (Lactobacillus plantarum).